We begin with the raw amino-acid sequence, 93 residues long: Co-chaperonin GroES (93 aa).

This sequence belongs to the GroES chaperonin family. Heptamer of 7 subunits arranged in a ring. Interacts with the chaperonin GroEL.

It is found in the cytoplasm. In terms of biological role, together with the chaperonin GroEL, plays an essential role in assisting protein folding. The GroEL-GroES system forms a nano-cage that allows encapsulation of the non-native substrate proteins and provides a physical environment optimized to promote and accelerate protein folding. GroES binds to the apical surface of the GroEL ring, thereby capping the opening of the GroEL channel. The polypeptide is Co-chaperonin GroES (Streptococcus anginosus).